The chain runs to 433 residues: Pyrimidine-nucleoside phosphorylase (433 aa).

81-83 (KHS) provides a ligand contact to phosphate. Residues Gly-88 and Thr-90 each coordinate K(+). Residues Thr-92, 108 to 110 (KMS), and Thr-120 each bind phosphate. Substrate contacts are provided by Arg-168 and Lys-187. K(+)-binding residues include Leu-243, Ala-246, and Glu-255.

This sequence belongs to the thymidine/pyrimidine-nucleoside phosphorylase family. Homodimer. The cofactor is K(+).

The enzyme catalyses uridine + phosphate = alpha-D-ribose 1-phosphate + uracil. It carries out the reaction thymidine + phosphate = 2-deoxy-alpha-D-ribose 1-phosphate + thymine. The catalysed reaction is 2'-deoxyuridine + phosphate = 2-deoxy-alpha-D-ribose 1-phosphate + uracil. Its function is as follows. Catalyzes phosphorolysis of the pyrimidine nucleosides uridine, thymidine and 2'-deoxyuridine with the formation of the corresponding pyrimidine base and ribose-1-phosphate. The polypeptide is Pyrimidine-nucleoside phosphorylase (Bacillus subtilis (strain 168)).